Consider the following 399-residue polypeptide: Elongation factor Tu (399 aa).

The tr-type G domain maps to 10–209 (KPHVNIGTIG…AVDSYIPTPV (200 aa)). Residues 19–26 (GHVDHGKT) form a G1 region. 19 to 26 (GHVDHGKT) provides a ligand contact to GTP. Residue Thr26 coordinates Mg(2+). Residues 60–64 (GITIA) are G2. The interval 81 to 84 (DCPG) is G3. GTP-binding positions include 81–85 (DCPGH) and 136–139 (NKAD). The segment at 136 to 139 (NKAD) is G4. A G5 region spans residues 174–176 (SAL).

This sequence belongs to the TRAFAC class translation factor GTPase superfamily. Classic translation factor GTPase family. EF-Tu/EF-1A subfamily. In terms of assembly, monomer.

The protein localises to the cytoplasm. The enzyme catalyses GTP + H2O = GDP + phosphate + H(+). Its function is as follows. GTP hydrolase that promotes the GTP-dependent binding of aminoacyl-tRNA to the A-site of ribosomes during protein biosynthesis. The sequence is that of Elongation factor Tu from Campylobacter concisus (strain 13826).